An 87-amino-acid chain; its full sequence is UPF0250 protein ESA_02696 (87 aa).

Belongs to the UPF0250 family.

The chain is UPF0250 protein ESA_02696 from Cronobacter sakazakii (strain ATCC BAA-894) (Enterobacter sakazakii).